The following is a 350-amino-acid chain: 3-dehydroquinate synthase (350 aa).

Residues 106–110, 130–131, K143, and K152 each bind NAD(+); these read GVIGD and TS. E185, H246, and H263 together coordinate Zn(2+).

The protein belongs to the sugar phosphate cyclases superfamily. Dehydroquinate synthase family. It depends on Co(2+) as a cofactor. Zn(2+) serves as cofactor. Requires NAD(+) as cofactor.

It is found in the cytoplasm. The catalysed reaction is 7-phospho-2-dehydro-3-deoxy-D-arabino-heptonate = 3-dehydroquinate + phosphate. It functions in the pathway metabolic intermediate biosynthesis; chorismate biosynthesis; chorismate from D-erythrose 4-phosphate and phosphoenolpyruvate: step 2/7. Catalyzes the conversion of 3-deoxy-D-arabino-heptulosonate 7-phosphate (DAHP) to dehydroquinate (DHQ). The sequence is that of 3-dehydroquinate synthase from Clostridium beijerinckii (strain ATCC 51743 / NCIMB 8052) (Clostridium acetobutylicum).